We begin with the raw amino-acid sequence, 396 residues long: Putative F-box/kelch-repeat protein At3g17540 (396 aa).

An F-box domain is found at 4–50 (TMVISDLPHEIESEILSRVPTKSLAKLHTTCKRWYALFRDPRFVKKN). Kelch repeat units follow at residues 163-209 (LRYC…GMSL), 253-299 (VLSI…FLAV), and 338-386 (RIYI…KRKG).

This Arabidopsis thaliana (Mouse-ear cress) protein is Putative F-box/kelch-repeat protein At3g17540.